The following is a 170-amino-acid chain: Crossover junction endodeoxyribonuclease RuvC (170 aa).

Active-site residues include Asp-9, Glu-70, and Asp-145. Positions 9, 70, and 145 each coordinate Mg(2+).

It belongs to the RuvC family. Homodimer which binds Holliday junction (HJ) DNA. The HJ becomes 2-fold symmetrical on binding to RuvC with unstacked arms; it has a different conformation from HJ DNA in complex with RuvA. In the full resolvosome a probable DNA-RuvA(4)-RuvB(12)-RuvC(2) complex forms which resolves the HJ. Requires Mg(2+) as cofactor.

It is found in the cytoplasm. The enzyme catalyses Endonucleolytic cleavage at a junction such as a reciprocal single-stranded crossover between two homologous DNA duplexes (Holliday junction).. The RuvA-RuvB-RuvC complex processes Holliday junction (HJ) DNA during genetic recombination and DNA repair. Endonuclease that resolves HJ intermediates. Cleaves cruciform DNA by making single-stranded nicks across the HJ at symmetrical positions within the homologous arms, yielding a 5'-phosphate and a 3'-hydroxyl group; requires a central core of homology in the junction. The consensus cleavage sequence is 5'-(A/T)TT(C/G)-3'. Cleavage occurs on the 3'-side of the TT dinucleotide at the point of strand exchange. HJ branch migration catalyzed by RuvA-RuvB allows RuvC to scan DNA until it finds its consensus sequence, where it cleaves and resolves the cruciform DNA. The polypeptide is Crossover junction endodeoxyribonuclease RuvC (Chlamydia muridarum (strain MoPn / Nigg)).